Reading from the N-terminus, the 345-residue chain is Glycerol-3-phosphate dehydrogenase [NAD(P)+] (345 aa).

The NADPH site is built by serine 11, tryptophan 12, histidine 32, arginine 33, and lysine 106. 3 residues coordinate sn-glycerol 3-phosphate: lysine 106, glycine 137, and serine 139. Alanine 141 provides a ligand contact to NADPH. Sn-glycerol 3-phosphate contacts are provided by lysine 192, aspartate 245, serine 255, arginine 256, and asparagine 257. Residue lysine 192 is the Proton acceptor of the active site. Position 256 (arginine 256) interacts with NADPH. Residues valine 280 and glutamate 282 each contribute to the NADPH site.

This sequence belongs to the NAD-dependent glycerol-3-phosphate dehydrogenase family.

It localises to the cytoplasm. The enzyme catalyses sn-glycerol 3-phosphate + NAD(+) = dihydroxyacetone phosphate + NADH + H(+). It catalyses the reaction sn-glycerol 3-phosphate + NADP(+) = dihydroxyacetone phosphate + NADPH + H(+). Its pathway is membrane lipid metabolism; glycerophospholipid metabolism. Its function is as follows. Catalyzes the reduction of the glycolytic intermediate dihydroxyacetone phosphate (DHAP) to sn-glycerol 3-phosphate (G3P), the key precursor for phospholipid synthesis. The chain is Glycerol-3-phosphate dehydrogenase [NAD(P)+] from Bacillus pumilus (strain SAFR-032).